We begin with the raw amino-acid sequence, 251 residues long: Small ribosomal subunit protein uS2 (251 aa).

Belongs to the universal ribosomal protein uS2 family.

The chain is Small ribosomal subunit protein uS2 from Synechococcus sp. (strain ATCC 27144 / PCC 6301 / SAUG 1402/1) (Anacystis nidulans).